A 1371-amino-acid chain; its full sequence is uncharacterized protein (1371 aa).

The interval 1020-1048 (WYLSSSKNTPEPRPDPEPTPEGHDNNLRP) is disordered. Basic and acidic residues predominate over residues 1029 to 1046 (PEPRPDPEPTPEGHDNNL). The Autotransporter domain maps to 1083–1371 (GEPKATSMWM…SAMLGVKYTF (289 aa)).

The protein resides in the cell outer membrane. This is an uncharacterized protein from Escherichia coli (strain K12).